A 194-amino-acid chain; its full sequence is MRQAEIKRKTQETDIELAVNLDQQEPVAIETGVGFFDHMLTLFARHSRISLTVKAEGDLWVDSHHTVEDVGIVLGQALRQALGDKAGINRYGTSFVPMDETLGMASLDLSGRSYLVFEADFDNPKLGNFETELVEEFFQALAFNLQMNLHLKILHGKNSHHKAESLFKATGRALREAITINPEIHGVNSTKGLL.

Belongs to the imidazoleglycerol-phosphate dehydratase family.

The protein localises to the cytoplasm. The catalysed reaction is D-erythro-1-(imidazol-4-yl)glycerol 3-phosphate = 3-(imidazol-4-yl)-2-oxopropyl phosphate + H2O. Its pathway is amino-acid biosynthesis; L-histidine biosynthesis; L-histidine from 5-phospho-alpha-D-ribose 1-diphosphate: step 6/9. This chain is Imidazoleglycerol-phosphate dehydratase, found in Streptococcus sanguinis (strain SK36).